Consider the following 884-residue polypeptide: DNA replication licensing factor mcm2 (884 aa).

Over residues 1 to 16 the composition is skewed to polar residues; sequence MADSSESFNIATSPRT. Disordered regions lie at residues 1-61 and 120-151; these read MADS…IGDA and LYDSDEEDEDRPARKRRMAERAAEGAPEEDEE. The segment covering 47-58 has biased composition (acidic residues); sequence PREEEEDGEELI. Residues 314–340 form a C4-type zinc finger; sequence CNKCNFILGPFFQSQNQEVKPGSCPEC. The region spanning 458–664 is the MCM domain; sequence IGERIFASIA…VQDEMLARFV (207 aa). ADP is bound by residues serine 515 and glutamine 516. An Arginine finger motif is present at residues 640–643; the sequence is SRFD.

This sequence belongs to the MCM family. As to quaternary structure, component of the mcm2-7 complex (RLF-M). The complex forms a toroidal hexameric ring with the proposed subunit order mcm2-mcm6-mcm4-mcm7-mcm3-mcm5. Component of the replisome complex. Component of the CMG helicase complex, composed of the mcm2-7 complex, the GINS complex and cdc45. Post-translationally, may be in a phosphorylated state in the mitotic mcm complex. Phosphorylated in the interphase mcm complex. Phosphorylated by the cdc7-dbf4 and cdc7-dbf4b complexes.

Its subcellular location is the nucleus. The protein resides in the chromosome. The enzyme catalyses ATP + H2O = ADP + phosphate + H(+). Functionally, acts as a component of the MCM2-7 complex (MCM complex) which is the replicative helicase essential for 'once per cell cycle' DNA replication initiation and elongation in eukaryotic cells. Core component of CDC45-MCM-GINS (CMG) helicase, the molecular machine that unwinds template DNA during replication, and around which the replisome is built. The active ATPase sites in the MCM2-7 ring are formed through the interaction surfaces of two neighboring subunits such that a critical structure of a conserved arginine finger motif is provided in trans relative to the ATP-binding site of the Walker A box of the adjacent subunit. The six ATPase active sites, however, are likely to contribute differentially to the complex helicase activity. Required for the entry in S phase and for cell division. The protein is DNA replication licensing factor mcm2 of Xenopus tropicalis (Western clawed frog).